Here is a 373-residue protein sequence, read N- to C-terminus: Queuine tRNA-ribosyltransferase (373 aa).

D91 serves as the catalytic Proton acceptor. Substrate is bound by residues 91-95 (DSGGF), D145, and Q187. Residues 245–251 (GVGTPED) are RNA binding. D264 serves as the catalytic Nucleophile. The segment at 269-273 (TRNAR) is RNA binding; important for wobble base 34 recognition. The Zn(2+) site is built by C302, C304, C307, and H333.

Belongs to the queuine tRNA-ribosyltransferase family. In terms of assembly, homodimer. Within each dimer, one monomer is responsible for RNA recognition and catalysis, while the other monomer binds to the replacement base PreQ1. The cofactor is Zn(2+).

The enzyme catalyses 7-aminomethyl-7-carbaguanine + guanosine(34) in tRNA = 7-aminomethyl-7-carbaguanosine(34) in tRNA + guanine. It functions in the pathway tRNA modification; tRNA-queuosine biosynthesis. Functionally, catalyzes the base-exchange of a guanine (G) residue with the queuine precursor 7-aminomethyl-7-deazaguanine (PreQ1) at position 34 (anticodon wobble position) in tRNAs with GU(N) anticodons (tRNA-Asp, -Asn, -His and -Tyr). Catalysis occurs through a double-displacement mechanism. The nucleophile active site attacks the C1' of nucleotide 34 to detach the guanine base from the RNA, forming a covalent enzyme-RNA intermediate. The proton acceptor active site deprotonates the incoming PreQ1, allowing a nucleophilic attack on the C1' of the ribose to form the product. After dissociation, two additional enzymatic reactions on the tRNA convert PreQ1 to queuine (Q), resulting in the hypermodified nucleoside queuosine (7-(((4,5-cis-dihydroxy-2-cyclopenten-1-yl)amino)methyl)-7-deazaguanosine). This chain is Queuine tRNA-ribosyltransferase, found in Syntrophobacter fumaroxidans (strain DSM 10017 / MPOB).